The following is a 491-amino-acid chain: Glucose-6-phosphate 1-dehydrogenase (491 aa).

Residues arginine 49, 91–92, and lysine 146 each bind NADP(+); that span reads DV. Residues histidine 176, lysine 180, glutamate 214, and aspartate 233 each contribute to the substrate site. Histidine 238 acts as the Proton acceptor in catalysis. The substrate site is built by lysine 338 and lysine 343.

The protein belongs to the glucose-6-phosphate dehydrogenase family.

It carries out the reaction D-glucose 6-phosphate + NADP(+) = 6-phospho-D-glucono-1,5-lactone + NADPH + H(+). It participates in carbohydrate degradation; pentose phosphate pathway; D-ribulose 5-phosphate from D-glucose 6-phosphate (oxidative stage): step 1/3. Functionally, catalyzes the oxidation of glucose 6-phosphate to 6-phosphogluconolactone. The polypeptide is Glucose-6-phosphate 1-dehydrogenase (Buchnera aphidicola subsp. Acyrthosiphon pisum (strain APS) (Acyrthosiphon pisum symbiotic bacterium)).